The following is a 211-amino-acid chain: Uridine kinase (211 aa).

ATP is bound at residue 15 to 22; the sequence is GGSGSGKT.

It belongs to the uridine kinase family.

The protein resides in the cytoplasm. The catalysed reaction is uridine + ATP = UMP + ADP + H(+). It catalyses the reaction cytidine + ATP = CMP + ADP + H(+). The protein operates within pyrimidine metabolism; CTP biosynthesis via salvage pathway; CTP from cytidine: step 1/3. It functions in the pathway pyrimidine metabolism; UMP biosynthesis via salvage pathway; UMP from uridine: step 1/1. The polypeptide is Uridine kinase (Latilactobacillus sakei subsp. sakei (strain 23K) (Lactobacillus sakei subsp. sakei)).